The sequence spans 255 residues: NAD-dependent protein deacylase (255 aa).

Residues 1–253 enclose the Deacetylase sirtuin-type domain; that stretch reads MIEEAPRIIA…VKVKRCLENK (253 aa). 20–39 is a binding site for NAD(+); the sequence is GAGVSAESGIPTFRDRGGLW. Substrate is bound by residues Tyr-64 and Arg-67. 98–101 serves as a coordination point for NAD(+); the sequence is QNID. The active-site Proton acceptor is the His-116. The Zn(2+) site is built by Cys-124, Cys-127, Cys-151, and Cys-154. NAD(+) contacts are provided by residues 191–193, 217–219, and Ala-235; these read GTS and NTK.

It belongs to the sirtuin family. Class III subfamily. The cofactor is Zn(2+).

It is found in the cytoplasm. The catalysed reaction is N(6)-acetyl-L-lysyl-[protein] + NAD(+) + H2O = 2''-O-acetyl-ADP-D-ribose + nicotinamide + L-lysyl-[protein]. It carries out the reaction N(6)-succinyl-L-lysyl-[protein] + NAD(+) + H2O = 2''-O-succinyl-ADP-D-ribose + nicotinamide + L-lysyl-[protein]. NAD-dependent lysine deacetylase and desuccinylase that specifically removes acetyl and succinyl groups on target proteins. Modulates the activities of several proteins which are inactive in their acylated form. Deacetylates the N-terminal lysine residue of Alba, the major archaeal chromatin protein and that, in turn, increases Alba's DNA binding affinity, thereby repressing transcription. In Thermococcus sibiricus (strain DSM 12597 / MM 739), this protein is NAD-dependent protein deacylase.